Reading from the N-terminus, the 254-residue chain is Metalloprotease YcaL (254 aa).

The first 19 residues, 1 to 19, serve as a signal peptide directing secretion; sequence MKNTKLLLAIATSAALLTG. Cysteine 20 carries N-palmitoyl cysteine lipidation. Cysteine 20 carries the S-diacylglycerol cysteine lipid modification. Residue histidine 134 participates in Zn(2+) binding. Glutamate 135 is a catalytic residue. Histidine 138 and glutamate 193 together coordinate Zn(2+). Positions 227–254 are disordered; it reads GRTQSMFDSHPPSTERAQHIRDRIASGK. Residues 242-254 show a composition bias toward basic and acidic residues; sequence RAQHIRDRIASGK.

Belongs to the peptidase M48B family. Requires Zn(2+) as cofactor.

The protein localises to the cell inner membrane. In terms of biological role, involved in the degradation of the LPS-assembly protein LptD. Degrades LptD that have engaged the Bam complex but are stalled at an early step in the outer membrane protein assembly process. In Escherichia coli (strain K12), this protein is Metalloprotease YcaL (ycaL).